A 494-amino-acid chain; its full sequence is Keratin, type I cytoskeletal 12 (494 aa).

A compositionally biased stretch (polar residues) spans 1-12 (MDLSNNTMSLSV). Residues 1 to 32 (MDLSNNTMSLSVRTPGLSRRLSSQSVIGRPRG) form a disordered region. Residues 1 to 124 (MDLSNNTMSL…GNDGGLLSGS (124 aa)) form a head region. A coil 1A region spans residues 125–160 (EKETMQNLNDRLASYLDKVRALEEANTELENKIREW). The 316-residue stretch at 125–440 (EKETMQNLND…RLLDGEAQGD (316 aa)) folds into the IF rod domain. The segment at 164 to 182 (RGTGTADASQSDYSKYYPL) is linker 1. The segment at 183-274 (IEDLRNKIIS…KNHEDELQSF (92 aa)) is coil 1B. The tract at residues 275–297 (RVGGPGEVSVEMDAAPGVDLTRL) is linker 12. The coil 2 stretch occupies residues 298–435 (LNDMRAQYET…IETYRRLLDG (138 aa)). The segment at 436 to 494 (EAQGDGLEESLFVTDSKSQAQSTDSSKDPTKTRKIKTVVQEMVNGEVVSSQVQEIEELM) is tail. The interval 446–468 (LFVTDSKSQAQSTDSSKDPTKTR) is disordered. Positions 448-459 (VTDSKSQAQSTD) are enriched in polar residues.

The protein belongs to the intermediate filament family. As to quaternary structure, heterotetramer of two type I and two type II keratins. Keratin-3 associates with keratin-12. Expressed in the corneal epithelium (at protein level).

In terms of biological role, involved in corneal epithelium organization, integrity and corneal keratin expression. The sequence is that of Keratin, type I cytoskeletal 12 (KRT12) from Homo sapiens (Human).